Consider the following 242-residue polypeptide: ATP synthase subunit a (242 aa).

A run of 5 helical transmembrane segments spans residues 28-48 (LHGQ…LLVV), 89-109 (LPFV…GALI), 128-148 (INTT…AGLS), 193-213 (LVVA…AMFL), and 214-234 (GLFT…NYIG).

The protein belongs to the ATPase A chain family. F-type ATPases have 2 components, CF(1) - the catalytic core - and CF(0) - the membrane proton channel. CF(1) has five subunits: alpha(3), beta(3), gamma(1), delta(1), epsilon(1). CF(0) has four main subunits: a, b, b' and c.

The protein localises to the cellular thylakoid membrane. In terms of biological role, key component of the proton channel; it plays a direct role in the translocation of protons across the membrane. This is ATP synthase subunit a from Synechococcus sp. (strain WH7803).